Reading from the N-terminus, the 247-residue chain is Acidic leucine-rich nuclear phosphoprotein 32 family member A (247 aa).

T15 is modified (phosphothreonine). Position 17 is a phosphoserine (S17). 4 LRR repeats span residues 18 to 41 (DVKELVLDNCRSIEGKIEGLTDEF), 43 to 64 (ELEFLSTINVGLTSISNLPKLN), 65 to 87 (KLKKLELSENRISGDLEVLAEKC), and 89 to 110 (NLKHLNLSGNKIKDLSTIEPLK). The 39-residue stretch at 123–161 (CEVTNLNAYRENVFKLLPQVMYLDGYDRDNKEAPDSDVE) folds into the LRRCT domain. Residues 150 to 172 (RDNKEAPDSDVEGYVEDDDEEDE) form a necessary for tumor-suppressive function region. The tract at residues 150–247 (RDNKEAPDSD…EPDDEGQEDD (98 aa)) is disordered. Over residues 157–230 (DSDVEGYVED…EDEEDAAEEE (74 aa)) the composition is skewed to acidic residues. Residues S158 and S202 each carry the phosphoserine modification. An interaction with E4F1 region spans residues 165–247 (EDDDEEDEDE…EPDDEGQEDD (83 aa)).

This sequence belongs to the ANP32 family. Component of the SET complex, composed of at least ANP32A, APEX1, HMGB2, NME1, SET and TREX1. Directly interacts with SET. Interacts with ATXN1/SCA1. Interacts with MAP1B. Interacts with ELAVL1. Part of the INHAT (inhibitor of histone acetyltransferases) complex. Interacts with E4F1. Post-translationally, phosphorylated on serine residues, at least in part by casein kinase 2/CK2. Some glutamate residues are glycylated by TTLL8. This modification occurs exclusively on glutamate residues and results in a glycine chain on the gamma-carboxyl group. Widely distributed in the central nervous system, with an abundant expression in the cerebellum.

It is found in the nucleus. It localises to the cytoplasm. Its subcellular location is the endoplasmic reticulum. Multifunctional protein that is involved in the regulation of many processes including tumor suppression, apoptosis, cell cycle progression or transcription. Promotes apoptosis by favouring the activation of caspase-9/CASP9 and allowing apoptosome formation. In addition, plays a role in the modulation of histone acetylation and transcription as part of the INHAT (inhibitor of histone acetyltransferases) complex. Inhibits the histone-acetyltranferase activity of EP300/CREBBP (CREB-binding protein) and EP300/CREBBP-associated factor by histone masking. Preferentially binds to unmodified histone H3 and sterically inhibiting its acetylation and phosphorylation leading to cell growth inhibition. Participates in other biochemical processes such as regulation of mRNA nuclear-to-cytoplasmic translocation and stability by its association with ELAVL1 (Hu-antigen R). Plays a role in E4F1-mediated transcriptional repression as well as inhibition of protein phosphatase 2A. The sequence is that of Acidic leucine-rich nuclear phosphoprotein 32 family member A (Anp32a) from Rattus norvegicus (Rat).